Consider the following 169-residue polypeptide: Large ribosomal subunit protein uL10 (169 aa).

The protein belongs to the universal ribosomal protein uL10 family. In terms of assembly, part of the ribosomal stalk of the 50S ribosomal subunit. The N-terminus interacts with L11 and the large rRNA to form the base of the stalk. The C-terminus forms an elongated spine to which L12 dimers bind in a sequential fashion forming a multimeric L10(L12)X complex.

Functionally, forms part of the ribosomal stalk, playing a central role in the interaction of the ribosome with GTP-bound translation factors. The sequence is that of Large ribosomal subunit protein uL10 from Deinococcus geothermalis (strain DSM 11300 / CIP 105573 / AG-3a).